The primary structure comprises 163 residues: Transcription elongation factor GreB (163 aa).

Residues 54–76 (GKRRMREIDRRIRFLTKRLEAAV) are a coiled coil.

It belongs to the GreA/GreB family. GreB subfamily.

Its function is as follows. Necessary for efficient RNA polymerase transcription elongation past template-encoded arresting sites. The arresting sites in DNA have the property of trapping a certain fraction of elongating RNA polymerases that pass through, resulting in locked ternary complexes. Cleavage of the nascent transcript by cleavage factors such as GreA or GreB allows the resumption of elongation from the new 3'terminus. GreB releases sequences of up to 9 nucleotides in length. This Neisseria meningitidis serogroup B (strain ATCC BAA-335 / MC58) protein is Transcription elongation factor GreB.